The chain runs to 465 residues: 6-phospho-beta-glucosidase GmuD (465 aa).

E170 serves as the catalytic Proton donor. E368 serves as the catalytic Nucleophile.

Belongs to the glycosyl hydrolase 1 family.

The enzyme catalyses 6-phospho-beta-D-glucosyl-(1-&gt;4)-D-glucose + H2O = D-glucose 6-phosphate + D-glucose. In terms of biological role, phospho-beta-D-glucosidase that seems to be involved in the degradation of glucomannan. Is also capable of hydrolyzing aryl-phospho-beta-D-glucosides, although very weakly, and plays only a minor role, if any, in the degradation of these substrates in vivo. This Bacillus subtilis (strain 168) protein is 6-phospho-beta-glucosidase GmuD (gmuD).